The following is a 362-amino-acid chain: Cap-specific mRNA (nucleoside-2'-O-)-methyltransferase 1 (362 aa).

One can recognise a RrmJ-type SAM-dependent 2'-O-MTase domain in the interval 87 to 294 (SFGNRAGHKL…ERYLVCLGFL (208 aa)). Residues Gly130 and Asp207 each coordinate S-adenosyl-L-methionine. The active-site Proton acceptor is Lys248.

It is found in the nucleus. The catalysed reaction is a 5'-end (N(7)-methyl 5'-triphosphoguanosine)-ribonucleoside in mRNA + S-adenosyl-L-methionine = a 5'-end (N(7)-methyl 5'-triphosphoguanosine)-(2'-O-methyl-ribonucleoside) in mRNA + S-adenosyl-L-homocysteine + H(+). Functionally, S-adenosyl-L-methionine-dependent methyltransferase that mediates RNA cap1 2'-O-ribose methylation to the 5'-cap structure of spliced leader and U1 small nuclear RNAs. Methylates the ribose of the first nucleotide of a m(7)GpppG-capped RNA to produce m(7)GpppNmp (cap1). Cap1 modification is linked to higher levels of translation. Recognizes a guanosine cap on RNA independent of its N(7) methylation status. The chain is Cap-specific mRNA (nucleoside-2'-O-)-methyltransferase 1 from Trypanosoma cruzi (strain CL Brener).